Here is a 259-residue protein sequence, read N- to C-terminus: Phosphate import ATP-binding protein PstB (259 aa).

The ABC transporter domain maps to 13 to 254 (IAVKNLNFFY…PTRKETEDYI (242 aa)). 45–52 (GPSGCGKS) contacts ATP.

It belongs to the ABC transporter superfamily. Phosphate importer (TC 3.A.1.7) family. As to quaternary structure, the complex is composed of two ATP-binding proteins (PstB), two transmembrane proteins (PstC and PstA) and a solute-binding protein (PstS).

The protein localises to the cell inner membrane. It carries out the reaction phosphate(out) + ATP + H2O = ADP + 2 phosphate(in) + H(+). Functionally, part of the ABC transporter complex PstSACB involved in phosphate import. Responsible for energy coupling to the transport system. This is Phosphate import ATP-binding protein PstB from Albidiferax ferrireducens (strain ATCC BAA-621 / DSM 15236 / T118) (Rhodoferax ferrireducens).